Here is a 115-residue protein sequence, read N- to C-terminus: uncharacterized protein (115 aa).

3 consecutive transmembrane segments (helical) span residues 10–30 (IAIL…SFWL), 47–67 (ASGI…ATVA), and 77–97 (VHFF…AIIV).

It is found in the cell membrane. This is an uncharacterized protein from Mycoplasma genitalium (strain ATCC 33530 / DSM 19775 / NCTC 10195 / G37) (Mycoplasmoides genitalium).